Reading from the N-terminus, the 304-residue chain is Quinolinate synthase (304 aa).

2 residues coordinate iminosuccinate: His24 and Ser41. Cys86 is a [4Fe-4S] cluster binding site. Iminosuccinate contacts are provided by residues 112–114 and Ser129; that span reads YVN. Cys171 contributes to the [4Fe-4S] cluster binding site. Iminosuccinate contacts are provided by residues 197 to 199 and Thr214; that span reads HPE. Cys259 lines the [4Fe-4S] cluster pocket.

It belongs to the quinolinate synthase family. Type 2 subfamily. It depends on [4Fe-4S] cluster as a cofactor.

It is found in the cytoplasm. The enzyme catalyses iminosuccinate + dihydroxyacetone phosphate = quinolinate + phosphate + 2 H2O + H(+). It participates in cofactor biosynthesis; NAD(+) biosynthesis; quinolinate from iminoaspartate: step 1/1. Its function is as follows. Catalyzes the condensation of iminoaspartate with dihydroxyacetone phosphate to form quinolinate. This Methanosarcina barkeri (strain Fusaro / DSM 804) protein is Quinolinate synthase.